Reading from the N-terminus, the 1373-residue chain is DNA-directed RNA polymerase subunit beta (1373 aa).

This sequence belongs to the RNA polymerase beta chain family. The RNAP catalytic core consists of 2 alpha, 1 beta, 1 beta' and 1 omega subunit. When a sigma factor is associated with the core the holoenzyme is formed, which can initiate transcription.

The enzyme catalyses RNA(n) + a ribonucleoside 5'-triphosphate = RNA(n+1) + diphosphate. Functionally, DNA-dependent RNA polymerase catalyzes the transcription of DNA into RNA using the four ribonucleoside triphosphates as substrates. The chain is DNA-directed RNA polymerase subunit beta from Rhodopseudomonas palustris (strain BisB18).